We begin with the raw amino-acid sequence, 342 residues long: AM-toxin biosynthesis protein 12 (342 aa).

The signal sequence occupies residues 1 to 20 (MSLLITSLAWGALLDPEVSS).

The protein operates within mycotoxin biosynthesis. Part of the gene clusters that mediate the biosynthesis of AM-toxins, host-selective toxins (HSTs) causing Alternaria blotch on apple, a worldwide distributed disease. AM-toxins are cyclic depsipeptides containing the 3 residues 2-hydroxy-isovaleric acid (2-HIV), dehydroalanine, L-alanine which are common for all 3 AM-toxins I to III. The fourth precursor is L-alpha-amino-methoxyphenyl-valeric acid (L-Amv) for AM-toxin I, L-alpha-amino-phenyl-valeric acid (L-Apv) for AM-toxin II, and L-alpha-amino-hydroxyphenyl-valeric acid (L-Ahv) for AM-toxin III. AM-toxins have two target sites for affecting susceptible apple cells; they cause invagination of the plasma membrane and electrolyte loss and chloroplast disorganization. The non-ribosomal peptide synthetase AMT1 contains 4 catalytic modules and is responsible for activation of each residue in AM-toxin. The aldo-keto reductase AMT2 catalyzes the conversion of 2-keto-isovaleric acid (2-KIV) to 2-hydroxy-isovaleric acid (2-HIV), one of the precursor residues incorporated by AMT1 during AM-toxin biosynthesis, by reduction of its ketone to an alcohol. The cytochrome P450 monooxygenase AMT3 and the thioesterase AMT4 are also important for AM-toxin production, but their exact function within the AM-toxin biosynthesis are not known yet. Up to 21 proteins (including AMT1 to AMT4) are predicted to be involved in AM-toxin biosynthesis since their expression ishighly up-regulated in AM-toxin-producing cultures. The protein is AM-toxin biosynthesis protein 12 of Alternaria alternata (Alternaria rot fungus).